Consider the following 248-residue polypeptide: ATP synthase subunit a (248 aa).

7 helical membrane passes run 29-49 (AMLT…CLFS), 85-105 (VFPF…QGLV), 115-135 (LIQT…IVLA), 143-163 (LFLP…IEIV), 176-196 (LFAN…VAWA), 201-221 (GGLL…LFGL), and 227-247 (LIQA…AIVL).

This sequence belongs to the ATPase A chain family. In terms of assembly, F-type ATPases have 2 components, CF(1) - the catalytic core - and CF(0) - the membrane proton channel. CF(1) has five subunits: alpha(3), beta(3), gamma(1), delta(1), epsilon(1). CF(0) has three main subunits: a, b and c.

Its subcellular location is the mitochondrion inner membrane. In terms of biological role, mitochondrial membrane ATP synthase (F(1)F(0) ATP synthase or Complex V) produces ATP from ADP in the presence of a proton gradient across the membrane which is generated by electron transport complexes of the respiratory chain. F-type ATPases consist of two structural domains, F(1) - containing the extramembraneous catalytic core and F(0) - containing the membrane proton channel, linked together by a central stalk and a peripheral stalk. During catalysis, ATP synthesis in the catalytic domain of F(1) is coupled via a rotary mechanism of the central stalk subunits to proton translocation. Key component of the proton channel; it may play a direct role in the translocation of protons across the membrane. The sequence is that of ATP synthase subunit a (ATP6) from Pylaiella littoralis (Seaweed).